Reading from the N-terminus, the 299-residue chain is ATP phosphoribosyltransferase (299 aa).

It belongs to the ATP phosphoribosyltransferase family. Long subfamily. Equilibrium between an active dimeric form, an inactive hexameric form and higher aggregates. Interconversion between the various forms is largely reversible and is influenced by the natural substrates and inhibitors of the enzyme. Requires Mg(2+) as cofactor.

It is found in the cytoplasm. The enzyme catalyses 1-(5-phospho-beta-D-ribosyl)-ATP + diphosphate = 5-phospho-alpha-D-ribose 1-diphosphate + ATP. It functions in the pathway amino-acid biosynthesis; L-histidine biosynthesis; L-histidine from 5-phospho-alpha-D-ribose 1-diphosphate: step 1/9. With respect to regulation, feedback inhibited by histidine. Catalyzes the condensation of ATP and 5-phosphoribose 1-diphosphate to form N'-(5'-phosphoribosyl)-ATP (PR-ATP). Has a crucial role in the pathway because the rate of histidine biosynthesis seems to be controlled primarily by regulation of HisG enzymatic activity. This chain is ATP phosphoribosyltransferase, found in Escherichia fergusonii (strain ATCC 35469 / DSM 13698 / CCUG 18766 / IAM 14443 / JCM 21226 / LMG 7866 / NBRC 102419 / NCTC 12128 / CDC 0568-73).